A 417-amino-acid polypeptide reads, in one-letter code: Probable phosphoglycerate kinase (417 aa).

(2R)-3-phosphoglycerate-binding residues include Val23, Asp24, Phe25, Asn26, Gln38, Arg39, Ser62, His63, Gly65, Arg66, Leu121, Arg122, His169, and Arg170. Residue Gly213 coordinates ADP. Gly213 is a CDP binding site. Residues Ala214 and Lys215 each coordinate AMP. An ATP-binding site is contributed by Ala214. Position 214 (Ala214) interacts with Mg(2+). Positions 217 and 218 each coordinate Mg(2+). Asp218 contacts CDP. Residue Lys219 coordinates AMP. Residue Lys219 participates in ATP binding. Gly237 is an ADP binding site. A CDP-binding site is contributed by Gly237. AMP contacts are provided by Gly238 and Gly312. Residues Gly238 and Gly312 each contribute to the ATP site. CDP-binding residues include Gly337, Ala339, and Phe342. Phe342 is an ADP binding site. Glu343 is a binding site for AMP. ATP contacts are provided by Glu343, Asp374, and Thr375. Residue Asp374 coordinates Mg(2+).

It belongs to the phosphoglycerate kinase family. As to quaternary structure, monomer. Requires Mg(2+) as cofactor.

The protein localises to the cytoplasm. It catalyses the reaction (2R)-3-phosphoglycerate + ATP = (2R)-3-phospho-glyceroyl phosphate + ADP. Its pathway is carbohydrate degradation; glycolysis; pyruvate from D-glyceraldehyde 3-phosphate: step 2/5. The protein is Probable phosphoglycerate kinase (pgk-1) of Caenorhabditis elegans.